Reading from the N-terminus, the 267-residue chain is UPF0173 metal-dependent hydrolase THEYE_A0282 (267 aa).

The protein belongs to the UPF0173 family.

The sequence is that of UPF0173 metal-dependent hydrolase THEYE_A0282 from Thermodesulfovibrio yellowstonii (strain ATCC 51303 / DSM 11347 / YP87).